A 146-amino-acid polypeptide reads, in one-letter code: Putative pre-16S rRNA nuclease (146 aa).

It belongs to the YqgF nuclease family.

The protein resides in the cytoplasm. Its function is as follows. Could be a nuclease involved in processing of the 5'-end of pre-16S rRNA. The protein is Putative pre-16S rRNA nuclease of Pseudomonas syringae pv. tomato (strain ATCC BAA-871 / DC3000).